A 239-amino-acid polypeptide reads, in one-letter code: Xyloglucan-specific endo-beta-1,4-glucanase A (239 aa).

Residues 1–14 (MKLLALSLASLASA) form the signal peptide. An N-linked (GlcNAc...) asparagine glycan is attached at Asn172.

Belongs to the glycosyl hydrolase 12 (cellulase H) family.

The protein localises to the secreted. The catalysed reaction is xyloglucan + H2O = xyloglucan oligosaccharides.. In terms of biological role, catalyzes endohydrolysis of 1,4-beta-D-glucosidic linkages in xyloglucan with retention of the beta-configuration of the glycosyl residues. Specific for xyloglucan and does not hydrolyze other cell wall components. Active against tamarind xyloglucan. The chain is Xyloglucan-specific endo-beta-1,4-glucanase A (xgeA) from Emericella nidulans (strain FGSC A4 / ATCC 38163 / CBS 112.46 / NRRL 194 / M139) (Aspergillus nidulans).